Here is a 339-residue protein sequence, read N- to C-terminus: 4-hydroxy-2-oxovalerate aldolase (339 aa).

The region spanning 8–260 is the Pyruvate carboxyltransferase domain; sequence IILHDMCLRD…STDVDVFKLM (253 aa). A substrate-binding site is contributed by 16 to 17; it reads RD. Asp-17 contributes to the Mn(2+) binding site. His-20 acts as the Proton acceptor in catalysis. Substrate is bound by residues Ser-170 and His-199. Residues His-199 and His-201 each coordinate Mn(2+). Substrate is bound at residue Tyr-290.

Belongs to the 4-hydroxy-2-oxovalerate aldolase family.

It catalyses the reaction (S)-4-hydroxy-2-oxopentanoate = acetaldehyde + pyruvate. In Shewanella woodyi (strain ATCC 51908 / MS32), this protein is 4-hydroxy-2-oxovalerate aldolase.